Reading from the N-terminus, the 74-residue chain is Mitotic-spindle organizing protein 1 (74 aa).

Belongs to the MOZART1 family. In terms of assembly, part of the gamma-tubulin complex.

The protein resides in the cytoplasm. The protein localises to the cytoskeleton. Its subcellular location is the microtubule organizing center. It localises to the spindle pole body. Its function is as follows. Required for gamma-tubulin complex recruitment to the microtubule organizing center (MTOC). The polypeptide is Mitotic-spindle organizing protein 1 (Emericella nidulans (strain FGSC A4 / ATCC 38163 / CBS 112.46 / NRRL 194 / M139) (Aspergillus nidulans)).